We begin with the raw amino-acid sequence, 409 residues long: Adenosine receptor A2a (409 aa).

The Extracellular segment spans residues 1 to 4; sequence MSSS. Residues 5–29 form a helical membrane-spanning segment; sequence VYITVELVIAVLAILGNVLVCWAVW. Residues 30 to 39 are Cytoplasmic-facing; it reads INSNLQNVTN. The helical transmembrane segment at 40-63 threads the bilayer; the sequence is YFVVSLAAADIAVGVLAIPFAITI. At 64 to 74 the chain is on the extracellular side; it reads STGFCAACHGC. Disulfide bonds link Cys-68/Cys-156, Cys-71/Cys-143, and Cys-74/Cys-163. The helical transmembrane segment at 75-97 threads the bilayer; sequence LFFACFVLVLTQSSIFSLLTITI. Residues 98-117 lie on the Cytoplasmic side of the membrane; that stretch reads DRYIAIRIPLRYNGLVTCTR. The chain crosses the membrane as a helical span at residues 118–140; sequence AKGIIAICWVLSFAIGLTPMLGW. Residues 141–170 lie on the Extracellular side of the membrane; the sequence is NNCSQPKGDKNHSESCDEGQVTCLFEDVVP. N-linked (GlcNAc...) asparagine glycans are attached at residues Asn-142 and Asn-151. Residue Glu-166 participates in adenosine binding. The chain crosses the membrane as a helical span at residues 171 to 195; it reads MNYMVYYNFFAFVLVPLLLMLGIYL. Residues 196 to 231 lie on the Cytoplasmic side of the membrane; the sequence is RIFLAARRQLKQMESQPLPGERTRSTLQKEVHPAKS. The helical transmembrane segment at 232–255 threads the bilayer; it reads LAIIVGLFALCCLPLNIINCFTFF. Asn-250 contributes to the adenosine binding site. Cys-256 and Cys-259 are disulfide-bonded. Residues 256-263 lie on the Extracellular side of the membrane; that stretch reads CPECDHAP. A helical transmembrane segment spans residues 264 to 287; sequence PWLMYLTIILSHGNSVVNPLIYAY. The adenosine site is built by Ser-274 and His-275. The Cytoplasmic segment spans residues 288–409; that stretch reads RIREFRQTFR…PPAHGGAGVS (122 aa). Disordered stretches follow at residues 316-336 and 369-409; these read TSAR…LRLN and QRSH…AGVS.

Belongs to the G-protein coupled receptor 1 family. As to quaternary structure, interacts (via cytoplasmic C-terminal domain) with USP4; the interaction is direct. May interact with DRD4. Interacts with NECAB2. Interacts (via cytoplasmic C-terminal domain) with GAS2L2; interaction enhances receptor-mediated adenylyl cyclase activity. In terms of processing, ubiquitinated. Deubiquitinated by USP4; leading to stabilization and expression at the cell surface.

It localises to the cell membrane. Receptor for adenosine. The activity of this receptor is mediated by G proteins which activate adenylyl cyclase. The chain is Adenosine receptor A2a (ADORA2A) from Cavia porcellus (Guinea pig).